We begin with the raw amino-acid sequence, 259 residues long: uncharacterized protein (259 aa).

The stretch at 158-187 (VELHLKIIEEDMKETTKKNKEKKQNSQSQE) forms a coiled coil. Basic and acidic residues predominate over residues 172–181 (TTKKNKEKKQ). 2 disordered regions span residues 172 to 197 (TTKK…MEVS) and 217 to 240 (PVKK…QLSK). Low complexity-rich tracts occupy residues 182–193 (NSQSQEISNSIE) and 217–226 (PVKKTSSASK).

This is an uncharacterized protein from Acanthamoeba polyphaga mimivirus (APMV).